Reading from the N-terminus, the 422-residue chain is Dioxygenase str8 (422 aa).

Positions 73, 75, 78, and 119 each coordinate Zn(2+). Residues H243, D245, and H382 each coordinate Fe cation.

This sequence belongs to the gamma-BBH/TMLD family. Fe(2+) serves as cofactor.

It participates in mycotoxin biosynthesis. Functionally, dioxygenase; part of the gene cluster that mediates the biosynthesis of strobilurin A, an antifungal polyketide that contains a key beta-methoxyacrylate toxophore that targets the complex III of the mitochondrial electron transport chain. Strobilurin biosynthesis begins with construction of benzoyl CoA by step-wise elimination of ammonia from phenylalanine by the phenylalanine ammonia-lyase str11, oxygenation by str8 and retro-Claisen reaction to form benzoic acid, which is activated to its CoA thiolester benzoyl CoA by the dedicated CoA ligase str10. Benzoyl CoA forms the starter unit for the highly reducing polyketide synthase stpks1 that produces the polyketide prestrobilutin A. The FAD-dependent oxygenase str9 then catalyzes the key oxidative rearrangement responsible for the creation of the beta-methoxyacrylate toxophore. Str9 performs epoxidation of the 2,3 olefin of prestrobilutin A, followed by Meinwald rearrangement to furnish the aldehyde intermediate. Rapid enolization of the aldehyde intermediate would give the beta-methoxyacrylate skeleton and methylations catalyzed by str2 and str3 complete the synthesis and lead to the production of strobilurin A. The short-chain dehydrogenase stl2 and the dehydrogenase str4 play a role in the shunt pathway leading to the production of bolineol. The cluster encodes no obvious halogenase gene that could be involved in production of strobilurin B, nor any obvious dimethylallyl-transferase that could be involved in the production of strobilurin G. It is possible that unknown proteins encoded in, or near, the cluster (such as str1 or stl1) may form new classes of halogenases or dimethylally-transferases, or that the responsible genes are located elsewhere on the genome. Similarly, proteins encoded by str5/str6 hydrolases appear to have no chemical role in the biosynthesis of strobilurin A. Finally, no obvious self-resistance gene is found within the cluster. The polypeptide is Dioxygenase str8 (Strobilurus tenacellus).